Consider the following 1170-residue polypeptide: Cellulose synthase-like protein D2 (1170 aa).

2 disordered regions span residues 1 to 75 and 269 to 295; these read MASN…PESG and NEVDNGGGGGGGGGLGGGDGQPAEFTS. Low complexity predominate over residues 10 to 24; it reads RHSNSSRLSRMSYSG. The span at 273-288 shows a compositional bias: gly residues; that stretch reads NGGGGGGGGGLGGGDG. The next 2 helical transmembrane spans lie at 311 to 331 and 341 to 361; these read VLSPYRLLILIRMAVLGLFLA and AMWLWGMSVVCELWFGLSWLL. D441 is a catalytic residue. Positions 527 to 551 form a coiled coil; sequence HAREEIKAMKRQREAALDDVVEAVK. D873 is an active-site residue. The next 6 membrane-spanning stretches (helical) occupy residues 955 to 975, 981 to 1001, 1027 to 1047, 1070 to 1090, 1104 to 1124, and 1134 to 1154; these read IFLIVYCFLPALSLFSGQFIV, TFLTYLLVITLTMCMLAVLEI, LAAVLQGLLKVIAGIEISFTL, SLMIPPIVIMMVNLIAIAVGF, LLGGVFFSFWVLAHLYPFAKG, and TIVFVWSGLLAITISLLWVAI.

Belongs to the glycosyltransferase 2 family. Plant cellulose synthase-like D subfamily.

It localises to the golgi apparatus membrane. Its function is as follows. Thought to be a Golgi-localized beta-glycan synthase that polymerize the backbones of noncellulosic polysaccharides (hemicelluloses) of plant cell wall. The protein is Cellulose synthase-like protein D2 (CSLD2) of Oryza sativa subsp. indica (Rice).